A 299-amino-acid polypeptide reads, in one-letter code: MDRNEGELAQVATRLHMRAPAKVNLSLQVLSRRADGYHDLATHMQKVSLYDELELCLTKQSGVSLVCSDGDIPLDEKNLAVRAALAYLARSSRVGQRGVRISLEKNIPVGAGLGGGSSDAGTVLRGLNQLLDNEFSEEELIEMARPLGADVPFFASEMSAAFATGIGDILQPLESTKEFDFILVNPGIFISTKEIFERFSLTLSPKRNIFARPFRVHERASLLDYMHNDLEEIVSDLCPAIDEMKSLLEANGASAVMMSGSGSTVFGVFQRSVGQKKINQVCKVLSCKYGEKVFAVQAV.

Residue Lys22 is part of the active site. 108 to 118 (PVGAGLGGGSS) serves as a coordination point for ATP. Asp150 is a catalytic residue.

Belongs to the GHMP kinase family. IspE subfamily.

The catalysed reaction is 4-CDP-2-C-methyl-D-erythritol + ATP = 4-CDP-2-C-methyl-D-erythritol 2-phosphate + ADP + H(+). It participates in isoprenoid biosynthesis; isopentenyl diphosphate biosynthesis via DXP pathway; isopentenyl diphosphate from 1-deoxy-D-xylulose 5-phosphate: step 3/6. Its function is as follows. Catalyzes the phosphorylation of the position 2 hydroxy group of 4-diphosphocytidyl-2C-methyl-D-erythritol. This is 4-diphosphocytidyl-2-C-methyl-D-erythritol kinase from Desulfotalea psychrophila (strain LSv54 / DSM 12343).